The following is a 56-amino-acid chain: Large ribosomal subunit protein bL33C (56 aa).

This sequence belongs to the bacterial ribosomal protein bL33 family.

The protein is Large ribosomal subunit protein bL33C of Sorangium cellulosum (strain So ce56) (Polyangium cellulosum (strain So ce56)).